The following is a 107-amino-acid chain: Iron-binding protein IscA (107 aa).

3 residues coordinate Fe cation: Cys35, Cys99, and Cys101.

This sequence belongs to the HesB/IscA family. As to quaternary structure, homodimer; may form tetramers and higher multimers. Fe cation serves as cofactor.

Functionally, is able to transfer iron-sulfur clusters to apo-ferredoxin. Multiple cycles of [2Fe2S] cluster formation and transfer are observed, suggesting that IscA acts catalytically. Recruits intracellular free iron so as to provide iron for the assembly of transient iron-sulfur cluster in IscU in the presence of IscS, L-cysteine and the thioredoxin reductase system TrxA/TrxB. This Enterobacter sp. (strain 638) protein is Iron-binding protein IscA.